Here is a 266-residue protein sequence, read N- to C-terminus: 4-hydroxy-tetrahydrodipicolinate reductase (266 aa).

10 to 15 contacts NAD(+); sequence GPRGRM. Lys38 serves as a coordination point for NADP(+). NAD(+) is bound by residues 99-101 and 125-128; these read GTT and APNF. The Proton donor/acceptor role is filled by His155. A (S)-2,3,4,5-tetrahydrodipicolinate-binding site is contributed by His156. Lys159 functions as the Proton donor in the catalytic mechanism. Residue 165–166 participates in (S)-2,3,4,5-tetrahydrodipicolinate binding; it reads GT.

It belongs to the DapB family.

The protein localises to the cytoplasm. It catalyses the reaction (S)-2,3,4,5-tetrahydrodipicolinate + NAD(+) + H2O = (2S,4S)-4-hydroxy-2,3,4,5-tetrahydrodipicolinate + NADH + H(+). It carries out the reaction (S)-2,3,4,5-tetrahydrodipicolinate + NADP(+) + H2O = (2S,4S)-4-hydroxy-2,3,4,5-tetrahydrodipicolinate + NADPH + H(+). It participates in amino-acid biosynthesis; L-lysine biosynthesis via DAP pathway; (S)-tetrahydrodipicolinate from L-aspartate: step 4/4. Catalyzes the conversion of 4-hydroxy-tetrahydrodipicolinate (HTPA) to tetrahydrodipicolinate. In Bacillus cereus (strain B4264), this protein is 4-hydroxy-tetrahydrodipicolinate reductase.